A 93-amino-acid polypeptide reads, in one-letter code: uncharacterized protein (93 aa).

Residues 41–62 (RSANRIPTTSSTSTSGTIPTTT) form a disordered region. A compositionally biased stretch (low complexity) spans 46-62 (IPTTSSTSTSGTIPTTT).

This is an uncharacterized protein from Dictyostelium discoideum (Social amoeba).